The sequence spans 741 residues: NAD(P)H-quinone oxidoreductase subunit 5, chloroplastic (741 aa).

A run of 16 helical transmembrane segments spans residues 9–29 (WIIP…LLLF), 40–60 (WAFQ…NLSI), 89–109 (IDPL…MVLI), 125–145 (FAYM…SNLI), 147–167 (IYIF…FWFT), 185–205 (GDFG…SFEF), 219–239 (NEVN…GAIA), 258–278 (TPIS…FLVA), 284–304 (FIVI…TVFF), 327–347 (LGYM…FHLI), 354–374 (ALLF…VGYC), 396–416 (NSFL…CFWS), 425–445 (WLYS…TAFY), 549–569 (LFPI…GIPF), 605–625 (VFSV…YKPV), and 721–741 (YLFF…FLNF).

It belongs to the complex I subunit 5 family. In terms of assembly, NDH is composed of at least 16 different subunits, 5 of which are encoded in the nucleus.

The protein localises to the plastid. The protein resides in the chloroplast thylakoid membrane. The catalysed reaction is a plastoquinone + NADH + (n+1) H(+)(in) = a plastoquinol + NAD(+) + n H(+)(out). It carries out the reaction a plastoquinone + NADPH + (n+1) H(+)(in) = a plastoquinol + NADP(+) + n H(+)(out). Its function is as follows. NDH shuttles electrons from NAD(P)H:plastoquinone, via FMN and iron-sulfur (Fe-S) centers, to quinones in the photosynthetic chain and possibly in a chloroplast respiratory chain. The immediate electron acceptor for the enzyme in this species is believed to be plastoquinone. Couples the redox reaction to proton translocation, and thus conserves the redox energy in a proton gradient. In Flaveria ramosissima (Yellowtops), this protein is NAD(P)H-quinone oxidoreductase subunit 5, chloroplastic (ndhF).